The following is a 404-amino-acid chain: Cysteine desulfurase IscS (404 aa).

Residues 75-76, Asn-155, Gln-183, and 203-205 each bind pyridoxal 5'-phosphate; these read AT and SGH. Lys-206 bears the N6-(pyridoxal phosphate)lysine mark. Thr-243 contributes to the pyridoxal 5'-phosphate binding site. Cys-328 serves as the catalytic Cysteine persulfide intermediate. Position 328 (Cys-328) interacts with [2Fe-2S] cluster.

Belongs to the class-V pyridoxal-phosphate-dependent aminotransferase family. NifS/IscS subfamily. As to quaternary structure, homodimer. Forms a heterotetramer with IscU, interacts with other sulfur acceptors. Requires pyridoxal 5'-phosphate as cofactor.

The protein localises to the cytoplasm. It carries out the reaction (sulfur carrier)-H + L-cysteine = (sulfur carrier)-SH + L-alanine. It participates in cofactor biosynthesis; iron-sulfur cluster biosynthesis. In terms of biological role, master enzyme that delivers sulfur to a number of partners involved in Fe-S cluster assembly, tRNA modification or cofactor biosynthesis. Catalyzes the removal of elemental sulfur atoms from cysteine to produce alanine. Functions as a sulfur delivery protein for Fe-S cluster synthesis onto IscU, an Fe-S scaffold assembly protein, as well as other S acceptor proteins. This is Cysteine desulfurase IscS from Klebsiella pneumoniae subsp. pneumoniae (strain ATCC 700721 / MGH 78578).